The primary structure comprises 173 residues: ATP-dependent protease subunit HslV (173 aa).

Thr2 is an active-site residue. Positions 158, 161, and 164 each coordinate Na(+).

The protein belongs to the peptidase T1B family. HslV subfamily. A double ring-shaped homohexamer of HslV is capped on each side by a ring-shaped HslU homohexamer. The assembly of the HslU/HslV complex is dependent on binding of ATP.

Its subcellular location is the cytoplasm. It catalyses the reaction ATP-dependent cleavage of peptide bonds with broad specificity.. Its activity is regulated as follows. Allosterically activated by HslU binding. Its function is as follows. Protease subunit of a proteasome-like degradation complex believed to be a general protein degrading machinery. The sequence is that of ATP-dependent protease subunit HslV from Mannheimia haemolytica (Pasteurella haemolytica).